The sequence spans 361 residues: Porphobilinogen deaminase (361 aa).

Cysteine 265 is subject to S-(dipyrrolylmethanemethyl)cysteine. The tract at residues 341 to 361 (LPPSSNTPTPQPITPITTNNS) is disordered.

Belongs to the HMBS family. Requires dipyrromethane as cofactor.

It catalyses the reaction 4 porphobilinogen + H2O = hydroxymethylbilane + 4 NH4(+). The protein operates within porphyrin-containing compound metabolism; protoporphyrin-IX biosynthesis; coproporphyrinogen-III from 5-aminolevulinate: step 2/4. In terms of biological role, tetrapolymerization of the monopyrrole PBG into the hydroxymethylbilane pre-uroporphyrinogen in several discrete steps. This chain is Porphobilinogen deaminase (HEM3), found in Debaryomyces hansenii (strain ATCC 36239 / CBS 767 / BCRC 21394 / JCM 1990 / NBRC 0083 / IGC 2968) (Yeast).